Consider the following 89-residue polypeptide: Cytochrome c6 (89 aa).

4 residues coordinate heme c: Cys-15, Cys-18, His-19, and Met-61.

This sequence belongs to the cytochrome c family. PetJ subfamily. Monomer. In terms of processing, binds 1 heme c group covalently per subunit.

It localises to the plastid. The protein localises to the chloroplast thylakoid lumen. Functionally, functions as an electron carrier between membrane-bound cytochrome b6-f and photosystem I in oxygenic photosynthesis. The chain is Cytochrome c6 (petJ) from Tetradesmus obliquus (Green alga).